A 327-amino-acid polypeptide reads, in one-letter code: Ketol-acid reductoisomerase (NADP(+)) (327 aa).

One can recognise a KARI N-terminal Rossmann domain in the interval 2-182 (AKIYTDKDAS…GATRAGVIET (181 aa)). Residues 25–28 (YGIQ), Arg48, Ser53, and 83–86 (DMEQ) each bind NADP(+). Residue His108 is part of the active site. Gly134 lines the NADP(+) pocket. Positions 183-327 (TFAEETETDL…GAEMRKLLFG (145 aa)) constitute a KARI C-terminal knotted domain. Residues Asp191, Glu195, Glu227, and Glu231 each coordinate Mg(2+). Substrate is bound at residue Ser252.

It belongs to the ketol-acid reductoisomerase family. It depends on Mg(2+) as a cofactor.

It catalyses the reaction (2R)-2,3-dihydroxy-3-methylbutanoate + NADP(+) = (2S)-2-acetolactate + NADPH + H(+). The catalysed reaction is (2R,3R)-2,3-dihydroxy-3-methylpentanoate + NADP(+) = (S)-2-ethyl-2-hydroxy-3-oxobutanoate + NADPH + H(+). It functions in the pathway amino-acid biosynthesis; L-isoleucine biosynthesis; L-isoleucine from 2-oxobutanoate: step 2/4. The protein operates within amino-acid biosynthesis; L-valine biosynthesis; L-valine from pyruvate: step 2/4. In terms of biological role, involved in the biosynthesis of branched-chain amino acids (BCAA). Catalyzes an alkyl-migration followed by a ketol-acid reduction of (S)-2-acetolactate (S2AL) to yield (R)-2,3-dihydroxy-isovalerate. In the isomerase reaction, S2AL is rearranged via a Mg-dependent methyl migration to produce 3-hydroxy-3-methyl-2-ketobutyrate (HMKB). In the reductase reaction, this 2-ketoacid undergoes a metal-dependent reduction by NADPH to yield (R)-2,3-dihydroxy-isovalerate. This Pyrobaculum neutrophilum (strain DSM 2338 / JCM 9278 / NBRC 100436 / V24Sta) (Thermoproteus neutrophilus) protein is Ketol-acid reductoisomerase (NADP(+)).